We begin with the raw amino-acid sequence, 244 residues long: MSKLDLNALNELPKVDRILALAETNAELEKLDAEGRVAWALDNLPGEYVLSSSFGIQAAVSLHLVNQIRPDIPVILTDTGYLFPETYRFIDELTDKLKLNLKVYRATESAAWQEARYGKLWEQGVEGIEKYNDINKVEPMNRALKELNAQTWFAGLRREQSGSRANLPVLAIQRGVFKVLPIIDWDNRTIYQYLQKHGLKYHPLWDEGYLSVGDTHTTRKWEPGMAEEETRFFGLKRECGLHEG.

Catalysis depends on C239, which acts as the Nucleophile; cysteine thiosulfonate intermediate.

It belongs to the PAPS reductase family. CysH subfamily.

The protein resides in the cytoplasm. The catalysed reaction is [thioredoxin]-disulfide + sulfite + adenosine 3',5'-bisphosphate + 2 H(+) = [thioredoxin]-dithiol + 3'-phosphoadenylyl sulfate. The protein operates within sulfur metabolism; hydrogen sulfide biosynthesis; sulfite from sulfate: step 3/3. Catalyzes the formation of sulfite from phosphoadenosine 5'-phosphosulfate (PAPS) using thioredoxin as an electron donor. This Escherichia coli (strain K12 / MC4100 / BW2952) protein is Phosphoadenosine 5'-phosphosulfate reductase.